Reading from the N-terminus, the 302-residue chain is Homoserine O-acetyltransferase (302 aa).

Cys-142 (acyl-thioester intermediate) is an active-site residue. Residues Lys-163 and Ser-192 each contribute to the substrate site. The active-site Proton acceptor is His-235. Glu-237 is a catalytic residue. Arg-249 serves as a coordination point for substrate.

The protein belongs to the MetA family.

The protein resides in the cytoplasm. It carries out the reaction L-homoserine + acetyl-CoA = O-acetyl-L-homoserine + CoA. The protein operates within amino-acid biosynthesis; L-methionine biosynthesis via de novo pathway; O-acetyl-L-homoserine from L-homoserine: step 1/1. Functionally, transfers an acetyl group from acetyl-CoA to L-homoserine, forming acetyl-L-homoserine. The chain is Homoserine O-acetyltransferase from Bacillus pumilus (strain SAFR-032).